We begin with the raw amino-acid sequence, 359 residues long: 3-dehydroquinate synthase (359 aa).

NAD(+) is bound by residues 69–74 (DAETGK), 103–107 (GAATD), 127–128 (TT), lysine 140, and lysine 149. Residues glutamate 182, histidine 244, and histidine 260 each coordinate Zn(2+).

The protein belongs to the sugar phosphate cyclases superfamily. Dehydroquinate synthase family. The cofactor is Co(2+). Zn(2+) serves as cofactor. NAD(+) is required as a cofactor.

The protein localises to the cytoplasm. It catalyses the reaction 7-phospho-2-dehydro-3-deoxy-D-arabino-heptonate = 3-dehydroquinate + phosphate. The protein operates within metabolic intermediate biosynthesis; chorismate biosynthesis; chorismate from D-erythrose 4-phosphate and phosphoenolpyruvate: step 2/7. Catalyzes the conversion of 3-deoxy-D-arabino-heptulosonate 7-phosphate (DAHP) to dehydroquinate (DHQ). This chain is 3-dehydroquinate synthase, found in Corynebacterium diphtheriae (strain ATCC 700971 / NCTC 13129 / Biotype gravis).